The sequence spans 195 residues: Protein GrpE (195 aa).

Residues methionine 1–alanine 20 are compositionally biased toward basic and acidic residues. The segment at methionine 1 to glutamate 40 is disordered.

The protein belongs to the GrpE family. As to quaternary structure, homodimer.

The protein localises to the cytoplasm. Participates actively in the response to hyperosmotic and heat shock by preventing the aggregation of stress-denatured proteins, in association with DnaK and GrpE. It is the nucleotide exchange factor for DnaK and may function as a thermosensor. Unfolded proteins bind initially to DnaJ; upon interaction with the DnaJ-bound protein, DnaK hydrolyzes its bound ATP, resulting in the formation of a stable complex. GrpE releases ADP from DnaK; ATP binding to DnaK triggers the release of the substrate protein, thus completing the reaction cycle. Several rounds of ATP-dependent interactions between DnaJ, DnaK and GrpE are required for fully efficient folding. The polypeptide is Protein GrpE (Pectobacterium atrosepticum (strain SCRI 1043 / ATCC BAA-672) (Erwinia carotovora subsp. atroseptica)).